The following is a 166-amino-acid chain: Small ribosomal subunit protein uS5 (166 aa).

An S5 DRBM domain is found at 11-74 (LQEKLIAVNR…EKARRNMINV (64 aa)).

This sequence belongs to the universal ribosomal protein uS5 family. As to quaternary structure, part of the 30S ribosomal subunit. Contacts proteins S4 and S8.

Functionally, with S4 and S12 plays an important role in translational accuracy. Located at the back of the 30S subunit body where it stabilizes the conformation of the head with respect to the body. This Haemophilus influenzae (strain 86-028NP) protein is Small ribosomal subunit protein uS5.